The following is a 1026-amino-acid chain: RecBCD enzyme subunit RecB (1026 aa).

A UvrD-like helicase ATP-binding domain is found at 1–438 (MSSFDIFSPT…LILDTNYRST (438 aa)). The interval 1–766 (MSSFDIFSPT…LANYANVTKH (766 aa)) is DNA-binding and helicase activity, interacts with RecC. Residue 21–28 (ASAGTGKT) coordinates ATP. The segment at 815-1026 (SRTIHSFSST…KGNGFLQPGR (212 aa)) is nuclease activity, interacts with RecD and RecA. His854, Asp940, and Asp953 together coordinate Mg(2+). Asp953 functions as the For nuclease activity in the catalytic mechanism.

This sequence belongs to the helicase family. UvrD subfamily. Heterotrimer of RecB, RecC and RecD. All subunits contribute to DNA-binding. Interacts with RecA. The cofactor is Mg(2+).

It carries out the reaction Exonucleolytic cleavage (in the presence of ATP) in either 5'- to 3'- or 3'- to 5'-direction to yield 5'-phosphooligonucleotides.. It catalyses the reaction Couples ATP hydrolysis with the unwinding of duplex DNA by translocating in the 3'-5' direction.. The catalysed reaction is ATP + H2O = ADP + phosphate + H(+). Its function is as follows. A helicase/nuclease that prepares dsDNA breaks (DSB) for recombinational DNA repair. Binds to DSBs and unwinds DNA via a highly rapid and processive ATP-dependent bidirectional helicase activity. Unwinds dsDNA until it encounters a Chi (crossover hotspot instigator) sequence from the 3' direction. Cuts ssDNA a few nucleotides 3' to the Chi site. The properties and activities of the enzyme are changed at Chi. The Chi-altered holoenzyme produces a long 3'-ssDNA overhang and facilitates RecA-binding to the ssDNA for homologous DNA recombination and repair. Holoenzyme degrades any linearized DNA that is unable to undergo homologous recombination. In the holoenzyme this subunit contributes ATPase, 3'-5' helicase, exonuclease activity and loads RecA onto ssDNA. The protein is RecBCD enzyme subunit RecB of Chlamydia trachomatis serovar D (strain ATCC VR-885 / DSM 19411 / UW-3/Cx).